Reading from the N-terminus, the 691-residue chain is CREB-regulated transcription coactivator 2 (691 aa).

Residues 1–20 are compositionally biased toward polar residues; it reads MATSGANGPGSATASASNPR. Positions 1 to 30 are disordered; sequence MATSGANGPGSATASASNPRKFSEKIALQK. Residue alanine 2 is modified to N-acetylalanine. Residue arginine 51 is modified to Asymmetric dimethylarginine; by PRMT6. 3 positions are modified to phosphoserine: serine 70, serine 86, and serine 90. Asymmetric dimethylarginine; by PRMT6 is present on residues arginine 99, arginine 120, and arginine 123. Residue serine 136 is modified to Phosphoserine. Asymmetric dimethylarginine; by PRMT6 is present on residues arginine 161 and arginine 168. Position 169 is a phosphothreonine (threonine 169). Serine 171 is modified (phosphoserine; by AMPK, MARK2, SIK1 and SIK2). A compositionally biased stretch (polar residues) spans 174-186; the sequence is ALHTSVMNPNPQD. The segment at 174–195 is disordered; that stretch reads ALHTSVMNPNPQDTYPGPTPPS. Threonine 192 is modified (phosphothreonine). Lysine 234 is covalently cross-linked (Glycyl lysine isopeptide (Lys-Gly) (interchain with G-Cter in SUMO2)). The short motif at 271-287 is the Nuclear export signal element; it reads TGGSLPDLTNLHFPPPL. Serine 274 bears the Phosphoserine; by MARK2 mark. 2 disordered regions span residues 280–306 and 335–491; these read NLHF…GGNS and HSPL…YSPP. Phosphoserine occurs at positions 306, 368, 393, 433, and 456. Composition is skewed to low complexity over residues 335 to 383 and 390 to 411; these read HSPL…HALP and PSLS…SPVL. Residues 447 to 468 show a composition bias toward polar residues; it reads SQQQLPKQFSPTMSPTLSSITQ. Tyrosine 488 is modified (phosphotyrosine). Serine 489 and serine 492 each carry phosphoserine. Phosphothreonine is present on threonine 501. The segment at 513 to 543 is disordered; that stretch reads CLVQPSGGQPPGRQPHYGTLYPPGSSGHGQQ. Serine 611, serine 621, and serine 622 each carry phosphoserine.

This sequence belongs to the TORC family. In terms of assembly, binds, as a tetramer, through its N-terminal region, with the bZIP domain of CREB1. 'Arg-314' in the bZIP domain of CREB1 is essential for this interaction. Interaction, via its C-terminal, with TAF4, enhances recruitment of TAF4 to CREB1. Interacts with SIK2. Interacts with 14-3-3 proteins, YWHAB and YWHAG. Interacts (probably when phosphorylated at Ser-171) with YWHAE. Interacts with calmodulin-dependent catalytic subunit PPP3CA/calcineurin A. Interaction with COP1 mediates nuclear export and degradation of CRTC2. Post-translationally, phosphorylation/dephosphorylation states of Ser-171 are required for regulating transduction of CREB activity. CRTCs/TORCs are inactive when phosphorylated, and active when dephosphorylated at this site. This primary site of phosphorylation, is regulated by cAMP and calcium levels and is dependent on the phosphorylation of SIKs (SIK1 and SIK2) by LKB1. Following adenylyl cyclase activation, dephosphorylated at Ser-171 by PPP3CA/calcineurin A resulting in CRTC2 dissociation from 14-3-3 proteins and PPP3CA. Both insulin and AMPK increase this phosphorylation of CRTC2 while glucagon suppresses it. Phosphorylation at Ser-274 by MARK2 is induced under low glucose conditions and dephosphorylated in response to glucose influx. Phosphorylation at Ser-274 promotes interaction with 14-3-3 proteins and translocation to the cytoplasm. Asymmetric dimethylation of arginine resisues by PRMT6 enhances the association of CRTC2 with CREB on the promoters of gluconeogenic genes.

It localises to the cytoplasm. It is found in the nucleus. Its function is as follows. Transcriptional coactivator for CREB1 which activates transcription through both consensus and variant cAMP response element (CRE) sites. Acts as a coactivator, in the SIK/TORC signaling pathway, being active when dephosphorylated and acts independently of CREB1 'Ser-133' phosphorylation. Enhances the interaction of CREB1 with TAF4. Regulates gluconeogenesis as a component of the LKB1/AMPK/TORC2 signaling pathway. Regulates the expression of specific genes such as the steroidogenic gene, StAR. Potent coactivator of PPARGC1A and inducer of mitochondrial biogenesis in muscle cells. The chain is CREB-regulated transcription coactivator 2 (Crtc2) from Rattus norvegicus (Rat).